Here is a 100-residue protein sequence, read N- to C-terminus: Aspartyl/glutamyl-tRNA(Asn/Gln) amidotransferase subunit C (100 aa).

This sequence belongs to the GatC family. Heterotrimer of A, B and C subunits.

The catalysed reaction is L-glutamyl-tRNA(Gln) + L-glutamine + ATP + H2O = L-glutaminyl-tRNA(Gln) + L-glutamate + ADP + phosphate + H(+). It catalyses the reaction L-aspartyl-tRNA(Asn) + L-glutamine + ATP + H2O = L-asparaginyl-tRNA(Asn) + L-glutamate + ADP + phosphate + 2 H(+). Allows the formation of correctly charged Asn-tRNA(Asn) or Gln-tRNA(Gln) through the transamidation of misacylated Asp-tRNA(Asn) or Glu-tRNA(Gln) in organisms which lack either or both of asparaginyl-tRNA or glutaminyl-tRNA synthetases. The reaction takes place in the presence of glutamine and ATP through an activated phospho-Asp-tRNA(Asn) or phospho-Glu-tRNA(Gln). The chain is Aspartyl/glutamyl-tRNA(Asn/Gln) amidotransferase subunit C from Streptococcus agalactiae serotype III (strain NEM316).